We begin with the raw amino-acid sequence, 388 residues long: Alcohol dehydrogenase-like 1 (388 aa).

Residues Cys53, Thr55, His76, Cys106, Cys109, Cys112, Cys120, and Cys185 each contribute to the Zn(2+) site. Residues Thr55 and His76 each contribute to the an alcohol site. Residue Thr55 coordinates NAD(+). NAD(+) is bound by residues 210 to 215 (GLGAVG), Asp234, Lys239, 304 to 306 (LGM), Phe331, and Arg381.

This sequence belongs to the zinc-containing alcohol dehydrogenase family. Class-III subfamily. Homodimer. It depends on Zn(2+) as a cofactor.

The protein localises to the cytoplasm. The catalysed reaction is a primary alcohol + NAD(+) = an aldehyde + NADH + H(+). The enzyme catalyses a secondary alcohol + NAD(+) = a ketone + NADH + H(+). The sequence is that of Alcohol dehydrogenase-like 1 from Arabidopsis thaliana (Mouse-ear cress).